A 623-amino-acid polypeptide reads, in one-letter code: Transketolase (623 aa).

M1 bears the N-acetylmethionine mark. N6-acetyllysine is present on residues K6 and K11. Substrate is bound at residue H37. Thiamine diphosphate contacts are provided by S40 and H77. The residue at position 104 (S104) is a Phosphoserine. 123 to 125 (GSL) serves as a coordination point for thiamine diphosphate. K144 bears the N6-acetyllysine mark. Mg(2+) is bound at residue D155. Residues G156 and N185 each contribute to the thiamine diphosphate site. Residues N185 and L187 each coordinate Mg(2+). 3 positions are modified to N6-acetyllysine: K204, K232, and K241. Thiamine diphosphate is bound by residues K244 and H258. Position 258 (H258) interacts with substrate. K260 is subject to N6-acetyllysine. A Phosphotyrosine modification is found at Y275. T287 bears the Phosphothreonine mark. S295 bears the Phosphoserine mark. Substrate is bound at residue R318. K352 is covalently cross-linked (Glycyl lysine isopeptide (Lys-Gly) (interchain with G-Cter in SUMO2)). E366 functions as the Proton donor in the catalytic mechanism. Position 392 (F392) interacts with thiamine diphosphate. H416 and D424 together coordinate substrate. Residue Q428 coordinates thiamine diphosphate. R474 is a substrate binding site. N6-acetyllysine occurs at positions 538 and 603.

It belongs to the transketolase family. Homodimer. Mg(2+) serves as cofactor. The cofactor is Ca(2+). Requires Mn(2+) as cofactor. It depends on Co(2+) as a cofactor. Thiamine diphosphate is required as a cofactor.

It carries out the reaction D-sedoheptulose 7-phosphate + D-glyceraldehyde 3-phosphate = aldehydo-D-ribose 5-phosphate + D-xylulose 5-phosphate. In terms of biological role, catalyzes the transfer of a two-carbon ketol group from a ketose donor to an aldose acceptor, via a covalent intermediate with the cofactor thiamine pyrophosphate. This is Transketolase (TKT) from Pongo abelii (Sumatran orangutan).